The sequence spans 285 residues: Iodotyrosine deiodinase 1 (285 aa).

Residues 1–21 (MFLLTPVLVAVVCILVVWVFK) form a helical membrane-spanning segment. FMN contacts are provided by residues 96–100 (RRSVR) and 124–125 (SG). Positions 126, 153, 157, and 178 each coordinate 3,5-diiodo-L-tyrosine. 3-iodo-L-tyrosine contacts are provided by Ala-126, Glu-153, Tyr-157, and Lys-178. Residues 233–235 (TTT) and Arg-275 contribute to the FMN site.

Belongs to the nitroreductase family. Homodimer. FMN is required as a cofactor.

The protein localises to the cell membrane. The protein resides in the cytoplasmic vesicle membrane. It carries out the reaction 2 iodide + L-tyrosine + 2 NADP(+) = 3,5-diiodo-L-tyrosine + 2 NADPH + H(+). It catalyses the reaction iodide + L-tyrosine + NADP(+) = 3-iodo-L-tyrosine + NADPH. The enzyme catalyses 3-iodo-L-tyrosine + iodide + NADP(+) = 3,5-diiodo-L-tyrosine + NADPH + H(+). The catalysed reaction is L-tyrosine + chloride + NADP(+) = 3-chloro-L-tyrosine + NADPH. It carries out the reaction bromide + L-tyrosine + NADP(+) = 3-bromo-L-tyrosine + NADPH. In terms of biological role, catalyzes the dehalogenation of halotyrosines such as 3-bromo-L-tyrosine, 3-chloro-L-tyrosine, 3-iodo-L-tyrosine and 3,5-diiodo-L-tyrosine. During thyroid hormone biosynthesis, facilitates iodide salvage by catalysing the oxidative NADPH-dependent deiodination of the halogenated by-products of thyroid hormone production, monoiodotyrosine (L-MIT) and diiodotyrosine (L-DIT). The scavanged iodide can then reenter the hormone-producing pathways. Acts more efficiently on 3-iodo-L-tyrosine than 3,5-diiodo-L-tyrosine. This chain is Iodotyrosine deiodinase 1 (Iyd), found in Mus musculus (Mouse).